A 429-amino-acid polypeptide reads, in one-letter code: Glutamate-1-semialdehyde 2,1-aminomutase (429 aa).

Lys265 is subject to N6-(pyridoxal phosphate)lysine.

This sequence belongs to the class-III pyridoxal-phosphate-dependent aminotransferase family. HemL subfamily. In terms of assembly, homodimer. It depends on pyridoxal 5'-phosphate as a cofactor.

It is found in the cytoplasm. The catalysed reaction is (S)-4-amino-5-oxopentanoate = 5-aminolevulinate. Its pathway is porphyrin-containing compound metabolism; protoporphyrin-IX biosynthesis; 5-aminolevulinate from L-glutamyl-tRNA(Glu): step 2/2. The polypeptide is Glutamate-1-semialdehyde 2,1-aminomutase (Alkalilimnicola ehrlichii (strain ATCC BAA-1101 / DSM 17681 / MLHE-1)).